We begin with the raw amino-acid sequence, 487 residues long: WRKY transcription factor 1 (487 aa).

The tract at residues 69–104 (QSEVDVASPVSEKAPKVSESSGALSLQSGSEGNSPF) is disordered. A Phosphoserine modification is found at serine 76. Residues 86–101 (SESSGALSLQSGSEGN) show a composition bias toward polar residues. Residues 105-169 (IREKVMEDGY…YFGEHDHPKP (65 aa)) constitute a DNA-binding region (WRKY 1). Positions 136, 141, 164, and 166 each coordinate Zn(2+). A disordered region spans residues 255–287 (SSRITGDNTHKDYNSPTAKRRKKGGNIELSPVE). The short motif at 273 to 277 (KRRKK) is the Nuclear localization signal element. A DNA-binding region (WRKY 2) is located at residues 301-366 (TLFDIVNDGY…YEGKHDHDMP (66 aa)). Zn(2+) contacts are provided by cysteine 332, cysteine 337, histidine 361, and histidine 363. Positions 380–487 (EVDDKEGDAN…QKPKTEPAQS (108 aa)) are disordered. The segment covering 390–401 (KTPQSSTLQSIT) has biased composition (polar residues). 2 stretches are compositionally biased toward basic and acidic residues: residues 429–462 (LDEK…DDKT) and 476–487 (EEQKPKTEPAQS).

It belongs to the WRKY group I family. As to expression, expressed to similar levels in root and flower, to a somewhat lower level in stem and to low levels in leaf and siliques.

It localises to the nucleus. In terms of biological role, transcription factor. Binds to a 5'-CGTTGACCGAG-3' consensus core sequence which contains a W box, a frequently occurring elicitor-responsive cis-acting element. The polypeptide is WRKY transcription factor 1 (Arabidopsis thaliana (Mouse-ear cress)).